Here is a 98-residue protein sequence, read N- to C-terminus: NADH-ubiquinone oxidoreductase chain 4L (98 aa).

Transmembrane regions (helical) follow at residues 1–21 (MPLISTNILLAFITALLGVLI), 26–46 (LMSSLLCLEGMMLSMFILVSL), and 61–81 (LILLVFAACEAAVGLALLVMV).

The protein belongs to the complex I subunit 4L family. As to quaternary structure, core subunit of respiratory chain NADH dehydrogenase (Complex I) which is composed of 45 different subunits.

Its subcellular location is the mitochondrion inner membrane. It catalyses the reaction a ubiquinone + NADH + 5 H(+)(in) = a ubiquinol + NAD(+) + 4 H(+)(out). In terms of biological role, core subunit of the mitochondrial membrane respiratory chain NADH dehydrogenase (Complex I) which catalyzes electron transfer from NADH through the respiratory chain, using ubiquinone as an electron acceptor. Part of the enzyme membrane arm which is embedded in the lipid bilayer and involved in proton translocation. The chain is NADH-ubiquinone oxidoreductase chain 4L (MT-ND4L) from Nycticebus coucang (Slow loris).